We begin with the raw amino-acid sequence, 404 residues long: Intracellular hyaluronan-binding protein 4.L (404 aa).

Disordered regions lie at residues 1–21 (MRLD…MQDN), 51–288 (LTRR…QEMS), and 359–379 (LTRP…REEA). Residues 8 to 19 (ETPSSPVNTEMQ) are compositionally biased toward polar residues. 3 stretches are compositionally biased toward basic and acidic residues: residues 71–81 (GKKESQKDRKA), 145–159 (KVDR…REVR), and 165–184 (RSNE…DKQM). The span at 188–200 (GGRGGMRGRGRGG) shows a compositional bias: gly residues. Composition is skewed to basic and acidic residues over residues 205-233 (TEND…DKRG) and 270-281 (EEHAKVPEEKNE).

The protein belongs to the SERBP1-HABP4 family. As to quaternary structure, associates with ribosomes; promoting ribosome stabilization. Interacts with eef2/eEF2; promoting ribosome stabilization.

Its subcellular location is the nucleus. The protein resides in the cytoplasm. It localises to the stress granule. The protein localises to the nucleolus. It is found in the nucleus speckle. Its subcellular location is the cajal body. Ribosome-binding protein that promotes ribosome hibernation, a process during which ribosomes are stabilized in an inactive state and preserved from proteasomal degradation. Acts via its association with eef2/eEF2 factor at the A-site of the ribosome, promoting ribosome stabilization in an inactive state compatible with storage. Plays a key role in ribosome hibernation in the mature egg by promoting ribosome stabilization. Ribosomes, which are produced in large quantities during oogenesis, are stored and translationally repressed in the egg and early embryo. The sequence is that of Intracellular hyaluronan-binding protein 4.L from Xenopus laevis (African clawed frog).